A 371-amino-acid polypeptide reads, in one-letter code: MSTNNSDIRVVVGMSGGVDSSVTAHILKEQGYDVIGIFMKNWDDTDEFGVCTATEDYDDVIRVANQIGIPYYAVNFEKEYWDKVFTYFLEEYKLGRTPNPDVMCNKEIKFKAFLEHAESLGADYVATGHYAQVKKIGDEIELLRGVDNNKDQTYFLNQLSQDQLKKVMFPLGGMEKTEVREIATKAGLATANKKDSTGICFIGERNFKQFLSEYLPAQPGEMRTLDGEVLGKHDGLMYYTIGQRHGLGIGGDGEPWFVVGKDLKANVLFVEQGFHHESLYSDSLIATDISFTTNAEKPKTFECTAKFRYRQTDTKVTVHLRSDGTAEVVFADPVRAITPGQAVVFYDGDICLGGGTIDTVWKNEAKLDYVG.

ATP contacts are provided by residues 13-20 and Met-39; that span reads GMSGGVDS. Residues 99–101 form an interaction with target base in tRNA region; that stretch reads NPD. Cys-104 functions as the Nucleophile in the catalytic mechanism. A disulfide bridge connects residues Cys-104 and Cys-200. Gly-128 contacts ATP. An interaction with tRNA region spans residues 150-152; the sequence is KDQ. Residue Cys-200 is the Cysteine persulfide intermediate of the active site. The interval 308–309 is interaction with tRNA; the sequence is RY.

It belongs to the MnmA/TRMU family.

The protein localises to the cytoplasm. The enzyme catalyses S-sulfanyl-L-cysteinyl-[protein] + uridine(34) in tRNA + AH2 + ATP = 2-thiouridine(34) in tRNA + L-cysteinyl-[protein] + A + AMP + diphosphate + H(+). Catalyzes the 2-thiolation of uridine at the wobble position (U34) of tRNA, leading to the formation of s(2)U34. This is tRNA-specific 2-thiouridylase MnmA from Listeria welshimeri serovar 6b (strain ATCC 35897 / DSM 20650 / CCUG 15529 / CIP 8149 / NCTC 11857 / SLCC 5334 / V8).